The primary structure comprises 458 residues: Exodeoxyribonuclease 7 large subunit (458 aa).

This sequence belongs to the XseA family. Heterooligomer composed of large and small subunits.

The protein localises to the cytoplasm. It carries out the reaction Exonucleolytic cleavage in either 5'- to 3'- or 3'- to 5'-direction to yield nucleoside 5'-phosphates.. Bidirectionally degrades single-stranded DNA into large acid-insoluble oligonucleotides, which are then degraded further into small acid-soluble oligonucleotides. The chain is Exodeoxyribonuclease 7 large subunit from Stutzerimonas stutzeri (strain A1501) (Pseudomonas stutzeri).